Consider the following 388-residue polypeptide: Succinate--CoA ligase [ADP-forming] subunit beta (388 aa).

The ATP-grasp domain maps to 9-244; sequence KSLFAEYGLP…PSQDDAREAH (236 aa). ATP is bound by residues lysine 46, 53–55, glutamate 99, threonine 102, and glutamate 107; that span reads GRG. Residues asparagine 199 and aspartate 213 each coordinate Mg(2+). Substrate-binding positions include asparagine 264 and 321 to 323; that span reads GIV.

Belongs to the succinate/malate CoA ligase beta subunit family. In terms of assembly, heterotetramer of two alpha and two beta subunits. The cofactor is Mg(2+).

It catalyses the reaction succinate + ATP + CoA = succinyl-CoA + ADP + phosphate. The catalysed reaction is GTP + succinate + CoA = succinyl-CoA + GDP + phosphate. It functions in the pathway carbohydrate metabolism; tricarboxylic acid cycle; succinate from succinyl-CoA (ligase route): step 1/1. Its function is as follows. Succinyl-CoA synthetase functions in the citric acid cycle (TCA), coupling the hydrolysis of succinyl-CoA to the synthesis of either ATP or GTP and thus represents the only step of substrate-level phosphorylation in the TCA. The beta subunit provides nucleotide specificity of the enzyme and binds the substrate succinate, while the binding sites for coenzyme A and phosphate are found in the alpha subunit. This Shewanella sp. (strain ANA-3) protein is Succinate--CoA ligase [ADP-forming] subunit beta.